The sequence spans 817 residues: Rho GTPase-activating protein gacII (817 aa).

Residues 20–204 form the Rho-GAP domain; the sequence is TTIVKIGTPK…TLIEEFQYIS (185 aa). Residues 238-298 enclose the SH3 domain; that stretch reads EDYLIAKANT…SQTYVDIIDI (61 aa). Low complexity predominate over residues 318–339; sequence ASTILHTPPTSSSSSSSSSSSS. Disordered regions lie at residues 318-638, 691-771, and 783-817; these read ASTI…NIPV, LGGQ…QQQQ, and LPPQNTNLSGKNLQRSSTSMLLNKLPPPPFSFNKN. Over residues 340 to 358 the composition is skewed to polar residues; sequence ILLTDNQPKLCSSTPRINN. Positions 359–391 are enriched in low complexity; sequence SPSSFSPSLSSTTPQLLVQQSPRQSPRQIPSIS. The span at 396–438 shows a compositional bias: polar residues; sequence PNNTNQPSFGHGTLQRTSTGYFSSKPLSISQPINMSKPTNMSP. Residues 461–471 show a composition bias toward pro residues; that stretch reads PPLPTKPPPLT. Residues 472–498 are compositionally biased toward low complexity; sequence IPSSSSLPTTPIKQQPQQPIQQPLTPQ. Positions 509–532 are enriched in polar residues; that stretch reads LSSSVNTANTGNCANILSPNSDRY. Composition is skewed to low complexity over residues 534–568, 577–587, and 607–624; these read SSRSQSSVHLSGSSSSSSSSSSSSSSSSSSSSSTS, KSKSSKNSPSK, and ITTTTTTTTTTTTTTIAT. Residues 625–635 are compositionally biased toward pro residues; the sequence is TPPPPSKPLPN. Residues 705-722 show a composition bias toward polar residues; that stretch reads KSQSSYLDNNNLPSRNTN. A compositionally biased stretch (pro residues) spans 725 to 734; that stretch reads NLPPRPPPLN. Low complexity-rich tracts occupy residues 735 to 744 and 752 to 771; these read IPQQQQQYKP and QSPQSSLNQSLQIPLQQQQQ. The segment covering 785–803 has biased composition (polar residues); the sequence is PQNTNLSGKNLQRSSTSML. The segment covering 807 to 817 has biased composition (pro residues); the sequence is LPPPPFSFNKN.

It is found in the cytoplasm. Rho GTPase-activating protein involved in the signal transduction pathway. This chain is Rho GTPase-activating protein gacII (gacII), found in Dictyostelium discoideum (Social amoeba).